The following is a 133-amino-acid chain: Small ribosomal subunit protein uS8 (133 aa).

It belongs to the universal ribosomal protein uS8 family. Part of the 30S ribosomal subunit. Contacts proteins S5 and S12.

Its function is as follows. One of the primary rRNA binding proteins, it binds directly to 16S rRNA central domain where it helps coordinate assembly of the platform of the 30S subunit. This Rhodopirellula baltica (strain DSM 10527 / NCIMB 13988 / SH1) protein is Small ribosomal subunit protein uS8.